A 191-amino-acid polypeptide reads, in one-letter code: Ankyrin repeat domain-containing protein 22 (191 aa).

ANK repeat units follow at residues Asn-39–Leu-68, Lys-72–Leu-100, Leu-101–Ala-130, and Tyr-134–Ile-163.

This chain is Ankyrin repeat domain-containing protein 22 (ANKRD22), found in Homo sapiens (Human).